The chain runs to 87 residues: Envelope glycoprotein N (87 aa).

The signal sequence occupies residues 1 to 24 (MGSITASFILITMQILFFCEDSSG). Residues 25–48 (EPNFAERNFWHASCSARGVYIDGS) lie on the Virion surface side of the membrane. Residues 49-69 (MITTLFFYASLLGVCVALISL) traverse the membrane as a helical segment. Over 70 to 87 (AYHACFRLFTRSVLRSTW) the chain is Intravirion.

Belongs to the herpesviridae glycoprotein N family. Interacts (via N-terminus) with gM (via N-terminus). The gM-gN heterodimer forms the gCII complex.

It is found in the virion membrane. The protein resides in the host membrane. Its subcellular location is the host Golgi apparatus. It localises to the host trans-Golgi network. In terms of biological role, envelope glycoprotein necessary for proper maturation of gM and modulation of its membrane fusion activity. Also plays a critical role in virion morphogenesis. The protein is Envelope glycoprotein N of Varicella-zoster virus (strain Dumas) (HHV-3).